We begin with the raw amino-acid sequence, 244 residues long: EEF1A lysine methyltransferase 2 (244 aa).

Residues 1 to 27 (MNADAEGHSGAVVPAQSPEGSSAADDF) are disordered. S21 is subject to Phosphoserine.

This sequence belongs to the class I-like SAM-binding methyltransferase superfamily. EFM4 family.

Its subcellular location is the cytoplasm. It is found in the nucleus. The enzyme catalyses L-lysyl-[protein] + 3 S-adenosyl-L-methionine = N(6),N(6),N(6)-trimethyl-L-lysyl-[protein] + 3 S-adenosyl-L-homocysteine + 3 H(+). Its function is as follows. Protein-lysine methyltransferase that selectively catalyzes the trimethylation of EEF1A at 'Lys-318'. The protein is EEF1A lysine methyltransferase 2 of Mus musculus (Mouse).